The primary structure comprises 479 residues: Probable acyl-CoA desaturase (479 aa).

Residues 1-18 are compositionally biased toward low complexity; that stretch reads MTAPSATAFSSATTQPTT. Residues 1-28 form a disordered region; it reads MTAPSATAFSSATTQPTTEGNASMRKRT. Over 1–61 the chain is Cytoplasmic; it reads MTAPSATAFS…PWTMQNWWRH (61 aa). A helical membrane pass occupies residues 62-82; it reads LNWLHCMLIFGLPMIAIYGVF. Residues 83 to 89 lie on the Lumenal side of the membrane; that stretch reads TTPLQTK. The chain crosses the membrane as a helical span at residues 90 to 110; that stretch reads TLIFAIIYYAYSGLGITAGYH. Positions 110, 115, 147, 150, and 151 each coordinate Fe cation. The Histidine box-1 signature appears at 110–115; sequence HRLWSH. Over 111 to 204 the chain is Cytoplasmic; sequence RLWSHRAYKA…DPFVMFNHRH (94 aa). The Histidine box-2 motif lies at 147 to 151; sequence HRAHH. The chain crosses the membrane as a helical span at residues 205 to 225; that stretch reads FLPIASFMAFIFPSLFCGLLW. The Lumenal segment spans residues 226–229; sequence GDYR. The helical transmembrane segment at 230–250 threads the bilayer; sequence GGYFYAGVCRLVFVHHATFCV. The Cytoplasmic portion of the chain corresponds to 251–479; the sequence is NSLAHLIGSQ…QPPIEAAAAN (229 aa). 4 residues coordinate Fe cation: His-255, His-284, His-287, and His-288. A Histidine box-3 motif is present at residues 284 to 288; the sequence is HNYHH. The Cytochrome b5 heme-binding domain maps to 357 to 433; it reads QLPVMEFEDF…LSTYRVAVVR (77 aa). 2 residues coordinate heme: His-390 and His-416.

Belongs to the fatty acid desaturase type 1 family. Requires Fe(2+) as cofactor.

Its subcellular location is the membrane. It catalyses the reaction octadecanoyl-CoA + 2 Fe(II)-[cytochrome b5] + O2 + 2 H(+) = (9Z)-octadecenoyl-CoA + 2 Fe(III)-[cytochrome b5] + 2 H2O. Functionally, stearoyl-CoA desaturase that utilizes O(2) and electrons from reduced cytochrome b5 to introduce the first double bond into saturated fatty acyl-CoA substrates. Catalyzes the insertion of a cis double bond at the delta-9 position into fatty acyl-CoA substrates including palmitoyl-CoA and stearoyl-CoA. Contributes to the biosynthesis of membrane phospholipids, cholesterol esters and triglycerides. This chain is Probable acyl-CoA desaturase, found in Schizosaccharomyces pombe (strain 972 / ATCC 24843) (Fission yeast).